Consider the following 500-residue polypeptide: MATTPRLASLLLLLALCAAAAGALRLPPDASFPGAQAERLIRALNLLPGRPRRGLGAGAEDVAPGQLLERRVTLPGLPEGVGDLGHHAGYYRLPNTHDARMFYFFFESRGKKEDPVVIWLTGGPGCSSELAVFYENGPFTIANNMSLVWNKFGWDKISNIIFVDPATGTGFSYSSDDRDTRHDEAGVSNDLYDFLQVFFKKHPEFVKNDFFITGESYAGHYIPAFASRVHQGNKKNEGTHINLKGFAIGNGLTDPAIQYKAYTDYALDMNLIQKADYDRINKFIPPCEFAIKLCGTDGKASCMAAYMVCNSIFNSIMKLVGTKNYYDVRKECEGKLCYDFSNLEKFFGDKAVRQAIGVGDIEFVSCSTSVYQAMLTDWMRNLEVGIPALLEDGINVLIYAGEYDLICNWLGNSRWVHSMEWSGQKDFAKTAESSFLVDDAQAGVLKSHGALSFLKVHNAGHMVPMDQPKAALEMLRRFTQGKLKESVPEEEPATTFYAAI.

Positions 1–21 (MATTPRLASLLLLLALCAAAA) are cleaved as a signal peptide. Residues 22 to 73 (GALRLPPDASFPGAQAERLIRALNLLPGRPRRGLGAGAEDVAPGQLLERRVT) constitute a propeptide that is removed on maturation. 3 disulfide bridges follow: Cys126–Cys366, Cys294–Cys309, and Cys332–Cys337. Asn144 is a glycosylation site (N-linked (GlcNAc...) asparagine). Ser216 is an active-site residue. Asp404 is an active-site residue. Position 407 (Cys407) interacts with substrate. His461 is an active-site residue. Positions 485–500 (ESVPEEEPATTFYAAI) are excised as a propeptide.

This sequence belongs to the peptidase S10 family. Monomer.

The catalysed reaction is Release of a C-terminal amino acid with broad specificity.. This Triticum aestivum (Wheat) protein is Serine carboxypeptidase 3 (CBP3).